The sequence spans 499 residues: Aspartyl/glutamyl-tRNA(Asn/Gln) amidotransferase subunit B (499 aa).

Belongs to the GatB/GatE family. GatB subfamily. As to quaternary structure, heterotrimer of A, B and C subunits.

The catalysed reaction is L-glutamyl-tRNA(Gln) + L-glutamine + ATP + H2O = L-glutaminyl-tRNA(Gln) + L-glutamate + ADP + phosphate + H(+). It carries out the reaction L-aspartyl-tRNA(Asn) + L-glutamine + ATP + H2O = L-asparaginyl-tRNA(Asn) + L-glutamate + ADP + phosphate + 2 H(+). In terms of biological role, allows the formation of correctly charged Asn-tRNA(Asn) or Gln-tRNA(Gln) through the transamidation of misacylated Asp-tRNA(Asn) or Glu-tRNA(Gln) in organisms which lack either or both of asparaginyl-tRNA or glutaminyl-tRNA synthetases. The reaction takes place in the presence of glutamine and ATP through an activated phospho-Asp-tRNA(Asn) or phospho-Glu-tRNA(Gln). The chain is Aspartyl/glutamyl-tRNA(Asn/Gln) amidotransferase subunit B from Bartonella tribocorum (strain CIP 105476 / IBS 506).